We begin with the raw amino-acid sequence, 322 residues long: 4-diphosphocytidyl-2-C-methyl-D-erythritol kinase (322 aa).

Residue K27 is part of the active site. 112–122 is an ATP binding site; it reads PVAGGMAGGSA. D154 is a catalytic residue.

The protein belongs to the GHMP kinase family. IspE subfamily.

The enzyme catalyses 4-CDP-2-C-methyl-D-erythritol + ATP = 4-CDP-2-C-methyl-D-erythritol 2-phosphate + ADP + H(+). Its pathway is isoprenoid biosynthesis; isopentenyl diphosphate biosynthesis via DXP pathway; isopentenyl diphosphate from 1-deoxy-D-xylulose 5-phosphate: step 3/6. Functionally, catalyzes the phosphorylation of the position 2 hydroxy group of 4-diphosphocytidyl-2C-methyl-D-erythritol. This chain is 4-diphosphocytidyl-2-C-methyl-D-erythritol kinase, found in Mycolicibacterium smegmatis (strain ATCC 700084 / mc(2)155) (Mycobacterium smegmatis).